Consider the following 1773-residue polypeptide: Mucin-22 (1773 aa).

A signal peptide spans 1-26 (MRRGNISPAFWFLWLLLFGLLGPSSE). The Extracellular segment spans residues 27–1660 (NTTAFTKGSD…VIKPSGYLQP (1634 aa)). Disordered stretches follow at residues 61–102 (TGSK…TDSG), 176–357 (TMAS…SETT), 372–405 (MGSE…VGSE), 434–572 (SETI…STAS), 590–674 (TVGS…EGSE), 754–1026 (DTTT…ETTM), 1064–1485 (TTIA…GSET), and 1603–1639 (MGAS…SMGT). The tract at residues 153–1514 (MASSTTSTAG…PTATSLTGSE (1362 aa)) is 124 X 10 AA approximate repeats. The segment covering 178 to 243 (ASTTGSETAT…GSEATTTSTA (66 aa)) has biased composition (low complexity). A compositionally biased stretch (polar residues) spans 248-258 (ITASSMSSETT). Low complexity predominate over residues 262–357 (AAGSNTTTAS…TVSTAGSETT (96 aa)). Composition is skewed to low complexity over residues 440 to 481 (STAG…AAST) and 490 to 546 (STAG…SEPT). Residues 547-572 (MASTMGSETTMASTIGPETTKVSTAS) are compositionally biased toward polar residues. Composition is skewed to low complexity over residues 755 to 1025 (TTTA…SETT) and 1064 to 1465 (TTIA…GSET). 2 stretches are compositionally biased toward polar residues: residues 1466 to 1485 (NTAC…GSET) and 1615 to 1639 (RTTT…SMGT). Residues 1661-1681 (WAIILISLAAVVAAVGLSVGL) form a helical membrane-spanning segment. Topologically, residues 1682 to 1773 (SFCLRNLFFP…GGHYGHGGGH (92 aa)) are cytoplasmic.

Expressed in lung by serous cells of the submucosal gland (at protein level). Detected in the placenta, lung and testis.

It localises to the membrane. This is Mucin-22 (MUC22) from Homo sapiens (Human).